The sequence spans 164 residues: Putative deoxyuridine 5'-triphosphate nucleotidohydrolase (164 aa).

A substrate-binding site is contributed by 65-67; sequence RSG. Residue Lys-71 is modified to N6-acetyllysine; by host. Substrate contacts are provided by residues 79–82, Gly-90, and 138–139; these read GVVD and YG.

It belongs to the dUTPase family. The cofactor is Mg(2+).

It carries out the reaction dUTP + H2O = dUMP + diphosphate + H(+). Its function is as follows. This enzyme is involved in nucleotide metabolism: it produces dUMP, the immediate precursor of thymidine nucleotides and it decreases the intracellular concentration of dUTP so that uracil cannot be incorporated into DNA. In Dryophytes versicolor (chameleon treefrog), this protein is Putative deoxyuridine 5'-triphosphate nucleotidohydrolase.